A 226-amino-acid chain; its full sequence is Phosphoribosylformylglycinamidine synthase subunit PurQ (226 aa).

Positions 2-226 constitute a Glutamine amidotransferase type-1 domain; it reads KFAVIQFPGS…LKNFLVTVKN (225 aa). The active-site Nucleophile is Cys-86. Active-site residues include His-195 and Glu-197.

Part of the FGAM synthase complex composed of 1 PurL, 1 PurQ and 2 PurS subunits.

It is found in the cytoplasm. The catalysed reaction is N(2)-formyl-N(1)-(5-phospho-beta-D-ribosyl)glycinamide + L-glutamine + ATP + H2O = 2-formamido-N(1)-(5-O-phospho-beta-D-ribosyl)acetamidine + L-glutamate + ADP + phosphate + H(+). The enzyme catalyses L-glutamine + H2O = L-glutamate + NH4(+). It participates in purine metabolism; IMP biosynthesis via de novo pathway; 5-amino-1-(5-phospho-D-ribosyl)imidazole from N(2)-formyl-N(1)-(5-phospho-D-ribosyl)glycinamide: step 1/2. In terms of biological role, part of the phosphoribosylformylglycinamidine synthase complex involved in the purines biosynthetic pathway. Catalyzes the ATP-dependent conversion of formylglycinamide ribonucleotide (FGAR) and glutamine to yield formylglycinamidine ribonucleotide (FGAM) and glutamate. The FGAM synthase complex is composed of three subunits. PurQ produces an ammonia molecule by converting glutamine to glutamate. PurL transfers the ammonia molecule to FGAR to form FGAM in an ATP-dependent manner. PurS interacts with PurQ and PurL and is thought to assist in the transfer of the ammonia molecule from PurQ to PurL. The chain is Phosphoribosylformylglycinamidine synthase subunit PurQ from Lactococcus lactis subsp. cremoris (Streptococcus cremoris).